Here is a 235-residue protein sequence, read N- to C-terminus: Purine nucleoside phosphorylase DeoD-type (235 aa).

An a purine D-ribonucleoside-binding site is contributed by His4. Phosphate-binding positions include Gly20, Arg24, Arg43, and 87 to 90 (RVGT). Residues Glu162, 179–181 (EME), and 203–204 (SD) each bind a purine D-ribonucleoside. Asp204 functions as the Proton donor in the catalytic mechanism.

Belongs to the PNP/UDP phosphorylase family. Homohexamer; trimer of homodimers.

The enzyme catalyses a purine D-ribonucleoside + phosphate = a purine nucleobase + alpha-D-ribose 1-phosphate. It catalyses the reaction a purine 2'-deoxy-D-ribonucleoside + phosphate = a purine nucleobase + 2-deoxy-alpha-D-ribose 1-phosphate. Catalyzes the reversible phosphorolytic breakdown of the N-glycosidic bond in the beta-(deoxy)ribonucleoside molecules, with the formation of the corresponding free purine bases and pentose-1-phosphate. The chain is Purine nucleoside phosphorylase DeoD-type from Bacillus anthracis (strain CDC 684 / NRRL 3495).